The chain runs to 206 residues: Large ribosomal subunit protein uL22m (206 aa).

The N-terminal 40 residues, 1–40 (MAAALLRELGALRVPNLRIWATQTLRVLPPSCIHTSASLD), are a transit peptide targeting the mitochondrion.

It belongs to the universal ribosomal protein uL22 family. As to quaternary structure, component of the mitochondrial ribosome large subunit (39S) which comprises a 16S rRNA and about 50 distinct proteins.

It is found in the mitochondrion. The protein is Large ribosomal subunit protein uL22m (Mrpl22) of Mus musculus (Mouse).